Here is a 196-residue protein sequence, read N- to C-terminus: RNA annealing protein YRA2 (196 aa).

Disordered stretches follow at residues M1–Q63 and D143–N196. One can recognise an RRM domain in the interval Q63–Q137. Over residues R149 to G159 the composition is skewed to basic and acidic residues.

Belongs to the YRA1 family. As to quaternary structure, associates with mRNPs.

It localises to the nucleus. In terms of biological role, involved in export of poly(A) mRNAs from the nucleus. Recruited to the coding sequences as well as poly-A sites of active genes. This is RNA annealing protein YRA2 (YRA2) from Eremothecium gossypii (strain ATCC 10895 / CBS 109.51 / FGSC 9923 / NRRL Y-1056) (Yeast).